Consider the following 303-residue polypeptide: Taste receptor type 2 member 13 (303 aa).

The Extracellular portion of the chain corresponds to 1–7 (MKSALPS). Residues 8–28 (IFTLVIIAEFIIGNLSNGFIV) traverse the membrane as a helical segment. Residues 29-55 (LINCIDWVSKRELSSVDKLLIILAISR) lie on the Cytoplasmic side of the membrane. Residues 56–76 (IGLIWEILVSWFLALHYLAIF) form a helical membrane-spanning segment. The Extracellular segment spans residues 77-85 (VSGTGLRIM). A helical membrane pass occupies residues 86–106 (IFSWIVSNHFNLWLATILSIF). At 107-128 (YLLKIASFSSPAFLYLKWRVNK) the chain is on the cytoplasmic side. A helical transmembrane segment spans residues 129–149 (VILLILLGTLVFLFLNLIQIN). The Extracellular segment spans residues 150–184 (MHIKDWLDRYERNTTWNFSMSDFETFSVSVKFTMT). 2 N-linked (GlcNAc...) asparagine glycosylation sites follow: asparagine 162 and asparagine 166. Residues 185 to 205 (MFSLTPFTVAFISFLLLIFSL) traverse the membrane as a helical segment. Residues 206-232 (QKHLQKMQLNYKGHRDPKTKVHTNALK) are Cytoplasmic-facing. A helical transmembrane segment spans residues 233 to 253 (IVISFLLFYASFFLCVLXSWI). Residues 254–261 (SELYQNTV) lie on the Extracellular side of the membrane. A helical membrane pass occupies residues 262–282 (IYMLCETIGVFYPSSHSFLLI). Topologically, residues 283 to 303 (LGNAKLRQAFLLVAAKVWAKR) are cytoplasmic.

This sequence belongs to the G-protein coupled receptor T2R family.

It is found in the membrane. Its function is as follows. Receptor that may play a role in the perception of bitterness and is gustducin-linked. May play a role in sensing the chemical composition of the gastrointestinal content. The activity of this receptor may stimulate alpha gustducin, mediate PLC-beta-2 activation and lead to the gating of TRPM5. In Gorilla gorilla gorilla (Western lowland gorilla), this protein is Taste receptor type 2 member 13 (TAS2R13).